We begin with the raw amino-acid sequence, 151 residues long: Chemokine-like factor (151 aa).

Residues 13 to 133 form the MARVEL domain; that stretch reads FCLSLKCFVK…DCALMCQKLR (121 aa). 4 helical membrane-spanning segments follow: residues 19 to 39, 45 to 65, 74 to 94, and 107 to 127; these read CFVKTLRLVVTVASMIFFIVA, YIVITGFEVTIILFLIALYMC, FFWPLLDVINSVVTTLFMLIV, and IMVGGVFGFLTVICTVADCAL. N142 is a glycosylation site (N-linked (GlcNAc...) asparagine).

It belongs to the chemokine-like factor family. As to expression, both isoforms have highest expression levels in testis with relatively lower expression level in liver, spleen, lung, brain and heart and barely detectable levels in skeletal muscle and kidney were barely detected. In most tissues, isoform CKLF2 has higher expression levels than isoform CKLF1.

The protein localises to the secreted. The protein resides in the membrane. Functionally, may play an important role in inflammation and regeneration of skeletal muscle. Essential for embryonic development. Its function is as follows. Has chemotactic response in monocytes, neutrophils and lymphocytes. Binds CCR4. In Rattus norvegicus (Rat), this protein is Chemokine-like factor (Cklf).